Consider the following 281-residue polypeptide: MKIIFFLCSFLFFIINTQCVTHESYQELVKKLEALEDAVLTGYSLFQKEKMVLNEEEITTKGASAQSGASAQSGASAQSGASAQSGTSGPSGPSGTSPSSRSNTLPRSNTSSGASPPADASDSDAKSYADLKHRVRNYLFTIKQLKYPESLDLPNHMLTLCDNIHGFKYLIDGYEEINELLYKLNFYFSLLRAKLNDVCANDYCQIPFNLKIRANELDVLKKLVFGYRKPLDNIKDNVGKMEDYIKKNKTTIANINELIEGSKKTIDQNKNADNEEGKKKI.

The N-terminal stretch at 1–19 (MKIIFFLCSFLFFIINTQC) is a signal peptide. A compositionally biased stretch (low complexity) spans 63–100 (ASAQSGASAQSGASAQSGASAQSGTSGPSGPSGTSPSS). The segment at 63–126 (ASAQSGASAQ…PADASDSDAK (64 aa)) is disordered. Polar residues predominate over residues 101 to 110 (RSNTLPRSNT). N109 carries an N-linked (GlcNAc...) asparagine glycan. Positions 111-120 (SSGASPPADA) are enriched in low complexity. N248 is a glycosylation site (N-linked (GlcNAc...) asparagine).

In terms of assembly, forms a complex composed of subunits p83, p30, p38, and p42 which remain non-covalently associated; the complex is formed at the merozoite surface prior to egress from host erythrocytes. Forms a complex composed of processed MSP1 subunits, MSP6 subunit p36 and MSP7; the complex is formed at the merozoite surface prior to egress from host erythrocytes. Within the complex, interacts (via subunit p38) with MSP6 subunit p36 and (via subunits p83, p30 and p38) with MSP7 (via subunit p22). Forms a complex composed of MSP1, MSP6, DBLMSP1 and DBLMSP2. Within the complex, interacts (via subunit p38) with DBLMSP1 and DBLMSP2. Forms a complex composed of MSP1, and rhoptry proteins RhopH3, RAP1 and CLAG9/RhopH3. Within the complex, interacts (via subunits p42 and p19) with RhopH3 (via C-terminus). Forms a complex composed of MSP1, MSP6, MSP7, MSP9 and MSP3; within the complex, MSP6 and MSP9 mediate the binding to the host erythrocyte. Interacts (via subunits p19 and p42) with MSP9; the interaction is direct; MSP1 subunits p19 or p42, and MSP9 form a co-ligand complex that interacts with host SLC4A1/Band 3 protein. May interact with PFD6. Interacts with host spectrin. In terms of processing, the p190 precursor is cleaved by SUB1 prior to merozoite egress into 4 subunits p83, p30, p38, and p42 which remain non-covalently associated. SUB1-mediated proteolytic cleavage occurs in an orderly manner; the first cleavage occurs at the p30/p38 site, followed by cleavage at the p83/p30 site, the last cleavage occurs at the p38/p42 site. The order of cleavage is essential for parasite viability. SUB1-mediated processing is essential for merozoite egress. In a second processing step during erythrocyte invasion, p42 is cleaved by SUB2 into p33 and p19; the latter remains attached to the merozoite surface via its GPI-anchor and is endocytosed during the subsequent ring stage.

Its subcellular location is the cell membrane. The protein resides in the secreted. Functionally, during the asexual blood stage, involved in merozoite egress from host erythrocytes possibly via its interaction with the host cytoskeleton protein spectrin resulting in the destabilization of the host cytoskeleton and thus leading to erythrocyte cell membrane rupture. Involved in the binding to host erythrocytes and is required for host erythrocyte invasion. The protein is Merozoite surface protein 1 of Plasmodium falciparum (isolate NF7 / Ghana).